A 105-amino-acid polypeptide reads, in one-letter code: N(4)-acetylcytidine amidohydrolase (105 aa).

The region spanning 7–93 is the ASCH domain; the sequence is TFFERFEHDI…VIAEIYPGLE (87 aa). K21 acts as the Proton acceptor in catalysis. Residue T24 is the Nucleophile of the active site. The Proton donor role is filled by E74.

This sequence belongs to the N(4)-acetylcytidine amidohydrolase family.

It catalyses the reaction N(4)-acetylcytidine + H2O = cytidine + acetate + H(+). The catalysed reaction is N(4)-acetyl-2'-deoxycytidine + H2O = 2'-deoxycytidine + acetate + H(+). The enzyme catalyses N(4)-acetylcytosine + H2O = cytosine + acetate + H(+). Functionally, catalyzes the hydrolysis of N(4)-acetylcytidine (ac4C). The sequence is that of N(4)-acetylcytidine amidohydrolase from Shewanella baltica (strain OS195).